A 510-amino-acid chain; its full sequence is Histidine ammonia-lyase (510 aa).

Positions 144–146 (ASG) form a cross-link, 5-imidazolinone (Ala-Gly). S145 is modified (2,3-didehydroalanine (Ser)).

The protein belongs to the PAL/histidase family. In terms of processing, contains an active site 4-methylidene-imidazol-5-one (MIO), which is formed autocatalytically by cyclization and dehydration of residues Ala-Ser-Gly.

The protein localises to the cytoplasm. It catalyses the reaction L-histidine = trans-urocanate + NH4(+). It functions in the pathway amino-acid degradation; L-histidine degradation into L-glutamate; N-formimidoyl-L-glutamate from L-histidine: step 1/3. The polypeptide is Histidine ammonia-lyase (Chromobacterium violaceum (strain ATCC 12472 / DSM 30191 / JCM 1249 / CCUG 213 / NBRC 12614 / NCIMB 9131 / NCTC 9757 / MK)).